The chain runs to 216 residues: UDP-N-acetylglucosamine transferase subunit ALG14 (216 aa).

Over 1 to 3 (MVC) the chain is Lumenal. Residues 4–24 (VLVLAAAAGAVAVFLILRIWV) traverse the membrane as a helical segment. Over 25-216 (VLRSMDVTPR…PKSVYLGRIV (192 aa)) the chain is Cytoplasmic.

This sequence belongs to the ALG14 family. As to quaternary structure, forms with ALG13 the active heterodimeric UDP-N-acetylglucosamine transferase complex.

It localises to the endoplasmic reticulum membrane. In terms of biological role, part of the UDP-N-acetylglucosamine transferase complex that operates in the biosynthetic pathway of dolichol-linked oligosaccharides, the glycan precursors employed in protein asparagine (N)-glycosylation. The assembly of dolichol-linked oligosaccharides begins on the cytosolic side of the endoplasmic reticulum membrane and finishes in its lumen. The sequential addition of sugars to dolichol pyrophosphate produces dolichol-linked oligosaccharides containing fourteen sugars, including two GlcNAcs, nine mannoses and three glucoses. Once assembled, the oligosaccharides are transferred from the lipid to nascent proteins by oligosaccharyltransferases. Functions as a protein-membrane adapter recruiting ALG13 at the cytoplasmic face of the endoplasmic reticulum, where the complex catalyzes the second step of dolichol pyrophosphate biosynthesis, transferring a beta1,4-linked N-acetylglucosamine (GlcNAc) from UDP-GlcNAc to GlcNAc-pyrophosphatedolichol (Gn-PDol) to produce N,N'-diacetylchitobiosyl diphosphodolichol. N,N'-diacetylchitobiosyl diphosphodolichol is a substrate for ALG1, the following enzyme in the biosynthetic pathway. The sequence is that of UDP-N-acetylglucosamine transferase subunit ALG14 from Homo sapiens (Human).